The sequence spans 289 residues: Transcription factor MafA (289 aa).

The segment covering 52–73 has biased composition (low complexity); the sequence is STPISTPCSSVPSSPSFCAPSP. 2 disordered regions span residues 52–87 and 126–164; these read STPI…PNAA and HHHH…HHHH. The span at 74 to 87 shows a compositional bias: polar residues; it reads GAQSGVNPSNPNAA. Basic residues predominate over residues 152-164; that stretch reads GHHHQVHHHHHHH. A basic motif region spans residues 201–226; sequence RLKQKRRTLKNRGYAQSCRYKRVQQR. In terms of domain architecture, bZIP spans 201-264; sequence RLKQKRRTLK…DLYKDKYEKL (64 aa). The leucine-zipper stretch occupies residues 229 to 250; that stretch reads LETEKCQLQSQVEQLKQEVSRL. The segment at 266–289 is disordered; it reads SRSFTTRESPPQGNPGKANADFFM. Residues 267-276 show a composition bias toward polar residues; that stretch reads RSFTTRESPP.

This sequence belongs to the bZIP family. Maf subfamily.

It is found in the nucleus. Functionally, transcription factor, possibly involved in transcription regulation during lens development. The chain is Transcription factor MafA (mafa) from Xenopus tropicalis (Western clawed frog).